Here is a 469-residue protein sequence, read N- to C-terminus: 6-phosphogluconate dehydrogenase, NADP(+)-dependent, decarboxylating (469 aa).

Residues 10-15, 33-35, 74-76, and N102 contribute to the NADP(+) site; these read GLAVMG, NRS, and VKA. Substrate-binding positions include N102 and 128–130; that span reads SGG. Residue K182 is the Proton acceptor of the active site. 185-186 contributes to the substrate binding site; that stretch reads HN. Catalysis depends on E189, which acts as the Proton donor. Substrate-binding residues include Y190, K260, R287, R446, and H452.

Belongs to the 6-phosphogluconate dehydrogenase family. As to quaternary structure, homodimer.

The catalysed reaction is 6-phospho-D-gluconate + NADP(+) = D-ribulose 5-phosphate + CO2 + NADPH. Its pathway is carbohydrate degradation; pentose phosphate pathway; D-ribulose 5-phosphate from D-glucose 6-phosphate (oxidative stage): step 3/3. In terms of biological role, catalyzes the oxidative decarboxylation of 6-phosphogluconate to ribulose 5-phosphate and CO(2), with concomitant reduction of NADP to NADPH. Is the predominant 6-P-gluconate dehydrogenase isoenzyme in B.subtilis during growth on glucose and gluconate. This Bacillus subtilis (strain 168) protein is 6-phosphogluconate dehydrogenase, NADP(+)-dependent, decarboxylating (gndA).